The following is a 155-amino-acid chain: Small ribosomal subunit protein uS7 (155 aa).

This sequence belongs to the universal ribosomal protein uS7 family. Part of the 30S ribosomal subunit. Contacts proteins S9 and S11.

In terms of biological role, one of the primary rRNA binding proteins, it binds directly to 16S rRNA where it nucleates assembly of the head domain of the 30S subunit. Is located at the subunit interface close to the decoding center, probably blocks exit of the E-site tRNA. The chain is Small ribosomal subunit protein uS7 from Lactococcus lactis subsp. lactis (strain IL1403) (Streptococcus lactis).